The following is a 264-amino-acid chain: Thymidylate synthase (264 aa).

Arg-21 contributes to the dUMP binding site. His-51 is a (6R)-5,10-methylene-5,6,7,8-tetrahydrofolate binding site. Arg-126–Arg-127 lines the dUMP pocket. Cys-146 serves as the catalytic Nucleophile. Residues Arg-166 to Asp-169, Asn-177, and His-207 to Tyr-209 each bind dUMP. Asp-169 contacts (6R)-5,10-methylene-5,6,7,8-tetrahydrofolate. A (6R)-5,10-methylene-5,6,7,8-tetrahydrofolate-binding site is contributed by Ala-263.

It belongs to the thymidylate synthase family. Bacterial-type ThyA subfamily. In terms of assembly, homodimer.

Its subcellular location is the cytoplasm. The enzyme catalyses dUMP + (6R)-5,10-methylene-5,6,7,8-tetrahydrofolate = 7,8-dihydrofolate + dTMP. The protein operates within pyrimidine metabolism; dTTP biosynthesis. Its function is as follows. Catalyzes the reductive methylation of 2'-deoxyuridine-5'-monophosphate (dUMP) to 2'-deoxythymidine-5'-monophosphate (dTMP) while utilizing 5,10-methylenetetrahydrofolate (mTHF) as the methyl donor and reductant in the reaction, yielding dihydrofolate (DHF) as a by-product. This enzymatic reaction provides an intracellular de novo source of dTMP, an essential precursor for DNA biosynthesis. The chain is Thymidylate synthase from Photorhabdus laumondii subsp. laumondii (strain DSM 15139 / CIP 105565 / TT01) (Photorhabdus luminescens subsp. laumondii).